The sequence spans 162 residues: NADH-quinone oxidoreductase subunit I (162 aa).

2 consecutive 4Fe-4S ferredoxin-type domains span residues 54-83 and 93-122; these read RRYENGEERCIACKLCEVVCPALAITINST and SSYEMDLFKCIFCGYCEESCPVDSIVETNI. Residues Cys-63, Cys-66, Cys-69, Cys-73, Cys-102, Cys-105, Cys-108, and Cys-112 each contribute to the [4Fe-4S] cluster site.

This sequence belongs to the complex I 23 kDa subunit family. NDH-1 is composed of 14 different subunits. Subunits NuoA, H, J, K, L, M, N constitute the membrane sector of the complex. Requires [4Fe-4S] cluster as cofactor.

It localises to the cell inner membrane. The catalysed reaction is a quinone + NADH + 5 H(+)(in) = a quinol + NAD(+) + 4 H(+)(out). Its function is as follows. NDH-1 shuttles electrons from NADH, via FMN and iron-sulfur (Fe-S) centers, to quinones in the respiratory chain. The immediate electron acceptor for the enzyme in this species is believed to be ubiquinone. Couples the redox reaction to proton translocation (for every two electrons transferred, four hydrogen ions are translocated across the cytoplasmic membrane), and thus conserves the redox energy in a proton gradient. In Francisella tularensis subsp. tularensis (strain FSC 198), this protein is NADH-quinone oxidoreductase subunit I.